Here is a 271-residue protein sequence, read N- to C-terminus: Thymidine kinase (271 aa).

ATP is bound by residues 74-81 and 152-155; these read GPMFAGKT and DEAQ. The active-site Proton acceptor is the glutamate 153. Tyrosine 184 contributes to the substrate binding site. Residues cysteine 209 and cysteine 212 each coordinate Zn(2+). Tyrosine 237 provides a ligand contact to substrate. Cysteine 241 contacts Zn(2+).

The protein belongs to the thymidine kinase family.

The catalysed reaction is thymidine + ATP = dTMP + ADP + H(+). The sequence is that of Thymidine kinase (TK) from Oryza sativa subsp. japonica (Rice).